A 356-amino-acid polypeptide reads, in one-letter code: Putative zinc finger protein At1g68190 (356 aa).

Zn(2+) contacts are provided by Cys14, Cys17, Cys37, His42, Cys57, Cys60, Cys80, and His85. Residues 14–56 (CEFCKAYRAVVYCIADTANLCLTCDAKVHSANSLSGRHLRTVL) form a B box-type 1; atypical zinc finger. The B box-type 2; atypical zinc finger occupies 57–97 (CDSCKNQPCVVRCFDHKMFLCHGCNDKFHGGGSSEHRRRDL). The segment at 159 to 178 (ENGSSSLTERGDPSPLELPK) is disordered.

The protein belongs to the CONSTANS family.

The protein localises to the nucleus. This is Putative zinc finger protein At1g68190 from Arabidopsis thaliana (Mouse-ear cress).